We begin with the raw amino-acid sequence, 522 residues long: Signal transduction histidine-protein kinase/phosphatase MprB (522 aa).

Topologically, residues 1–30 are cytoplasmic; that stretch reads MIRLHRPQRPPLRAPLRATPSLSLRWRVML. A helical transmembrane segment spans residues 31–51; sequence LAMSMVAMVVVLMAFAVYAVI. At 52–167 the chain is on the extracellular side; sequence SAALYSDIDN…PTEAVMNKLR (116 aa). Residues 168 to 188 form a helical membrane-spanning segment; that stretch reads WVLLIVGGVGVAVAAVAGGMV. Residues 189-522 lie on the Cytoplasmic side of the membrane; that stretch reads TRAGLRPVAR…SVDSQSARAR (334 aa). Residues 190-242 enclose the HAMP domain; sequence RAGLRPVARLTEAAERVARTDDLRPIPVFGSDELARLTESFNLMLRALAESRE. The Histidine kinase domain occupies 250–470; sequence DAGHELRTPL…SFYVLLPGRP (221 aa). His-253 is modified (phosphohistidine; by autocatalysis). The interval 468-522 is disordered; sequence GRPLPPAGHSTPAGESETDKAEAATDPAVPVAGDTANSRESANVISVDSQSARAR. Residues 502 to 522 show a composition bias toward polar residues; sequence TANSRESANVISVDSQSARAR.

It depends on Mg(2+) as a cofactor. Requires Mn(2+) as cofactor. Post-translationally, autophosphorylated.

The protein resides in the cell membrane. The enzyme catalyses ATP + protein L-histidine = ADP + protein N-phospho-L-histidine.. In terms of biological role, member of the two-component regulatory system MprB/MprA which contributes to maintaining a balance among several systems involved in stress resistance and is required for establishment and maintenance of persistent infection in the host. In response to environmental signals MprB acts both as a membrane-associated protein kinase that undergoes autophosphorylation and subsequently transfers the phosphate to MprA, and a protein phosphatase that dephosphorylates phospho-MprA. This is Signal transduction histidine-protein kinase/phosphatase MprB (mprB) from Mycobacterium avium (strain 104).